Consider the following 114-residue polypeptide: MSLKDYLRQSISKDLEVRHRDSLKIRLGERHPLSVHQHMIAARQIIKSDNAEHQHVISSLSGFLDKQKSFLKVQQRALKQLEKLDVDEIIDTAAEVKAVSNNIKETLMASTELE.

The protein belongs to the herpesviridae UL96 family.

The chain is Protein U68 (U68) from Homo sapiens (Human).